The sequence spans 145 residues: Hemoglobin subunit beta-2 (145 aa).

In terms of domain architecture, Globin spans 2 to 145 (HLTAEDRKEI…GVSHALGHGY (144 aa)). Residues histidine 63 and histidine 92 each coordinate heme b.

This sequence belongs to the globin family. Minor hemoglobin is a tetramer of two alpha-2 chains and two beta-2 chains. Red blood cells.

Functionally, involved in oxygen transport from the lung to the various peripheral tissues. The protein is Hemoglobin subunit beta-2 (HBB2) of Triturus cristatus (Great crested newt).